The sequence spans 329 residues: uncharacterized protein (329 aa).

Disordered stretches follow at residues R16 to C41 and L183 to P229. The span at S213–P229 shows a compositional bias: basic and acidic residues.

In terms of tissue distribution, expressed in testis and epididymis. Expressed at lower levels in ovary.

In terms of biological role, dispensable for normal development and fertility. This is an uncharacterized protein from Mus musculus (Mouse).